A 285-amino-acid polypeptide reads, in one-letter code: Small ribosomal subunit biogenesis GTPase RsgA (285 aa).

The CP-type G domain maps to 56–217; the sequence is DNLLIRPIVA…IIDTPGFSSI (162 aa). GTP-binding positions include 105-108 and 159-167; these read NKID and GPSGVGKSS. 4 residues coordinate Zn(2+): C241, C246, H248, and C254.

Belongs to the TRAFAC class YlqF/YawG GTPase family. RsgA subfamily. In terms of assembly, monomer. Associates with 30S ribosomal subunit, binds 16S rRNA. The cofactor is Zn(2+).

The protein resides in the cytoplasm. Its function is as follows. One of several proteins that assist in the late maturation steps of the functional core of the 30S ribosomal subunit. Helps release RbfA from mature subunits. May play a role in the assembly of ribosomal proteins into the subunit. Circularly permuted GTPase that catalyzes slow GTP hydrolysis, GTPase activity is stimulated by the 30S ribosomal subunit. In Fusobacterium nucleatum subsp. nucleatum (strain ATCC 25586 / DSM 15643 / BCRC 10681 / CIP 101130 / JCM 8532 / KCTC 2640 / LMG 13131 / VPI 4355), this protein is Small ribosomal subunit biogenesis GTPase RsgA.